Reading from the N-terminus, the 62-residue chain is UPF0434 protein Arad_4458 (62 aa).

This sequence belongs to the UPF0434 family.

The protein is UPF0434 protein Arad_4458 of Rhizobium rhizogenes (strain K84 / ATCC BAA-868) (Agrobacterium radiobacter).